We begin with the raw amino-acid sequence, 60 residues long: Large ribosomal subunit protein uL30 (60 aa).

It belongs to the universal ribosomal protein uL30 family. Part of the 50S ribosomal subunit.

In Shewanella denitrificans (strain OS217 / ATCC BAA-1090 / DSM 15013), this protein is Large ribosomal subunit protein uL30.